We begin with the raw amino-acid sequence, 784 residues long: DNA ligase (784 aa).

NAD(+) contacts are provided by residues 35–39, 84–85, and E117; these read DAEYD and SL. K119 functions as the N6-AMP-lysine intermediate in the catalytic mechanism. R140, E177, K294, and K318 together coordinate NAD(+). Positions 412, 415, 442, and 448 each coordinate Zn(2+). The 82-residue stretch at 703–784 folds into the BRCT domain; the sequence is AEGLPLAGQT…FLALLRQLES (82 aa).

This sequence belongs to the NAD-dependent DNA ligase family. LigA subfamily. It depends on Mg(2+) as a cofactor. Mn(2+) is required as a cofactor.

It carries out the reaction NAD(+) + (deoxyribonucleotide)n-3'-hydroxyl + 5'-phospho-(deoxyribonucleotide)m = (deoxyribonucleotide)n+m + AMP + beta-nicotinamide D-nucleotide.. Its function is as follows. DNA ligase that catalyzes the formation of phosphodiester linkages between 5'-phosphoryl and 3'-hydroxyl groups in double-stranded DNA using NAD as a coenzyme and as the energy source for the reaction. It is essential for DNA replication and repair of damaged DNA. The polypeptide is DNA ligase (Azotobacter vinelandii (strain DJ / ATCC BAA-1303)).